The following is a 220-amino-acid chain: ATP synthase subunit beta, chloroplastic (220 aa).

Belongs to the ATPase alpha/beta chains family. In terms of assembly, F-type ATPases have 2 components, CF(1) - the catalytic core - and CF(0) - the membrane proton channel. CF(1) has five subunits: alpha(3), beta(3), gamma(1), delta(1), epsilon(1). CF(0) has four main subunits: a(1), b(1), b'(1) and c(9-12).

The protein localises to the plastid. Its subcellular location is the chloroplast thylakoid membrane. It carries out the reaction ATP + H2O + 4 H(+)(in) = ADP + phosphate + 5 H(+)(out). Functionally, produces ATP from ADP in the presence of a proton gradient across the membrane. The catalytic sites are hosted primarily by the beta subunits. This chain is ATP synthase subunit beta, chloroplastic (atpB), found in Osmundastrum cinnamomeum (Cinnamon fern).